Consider the following 475-residue polypeptide: Gamma-aminobutyric acid receptor subunit gamma-2 (475 aa).

An N-terminal signal peptide occupies residues 1 to 39; sequence MSSPNIWSTGSSVYSTPVFSQKMTLWILLLLSLYPGLTR. The Extracellular portion of the chain corresponds to 41–275; it reads KSDDDYEDYA…FDLSRRMGYF (235 aa). Residues Asn-52 and Asn-129 are each glycosylated (N-linked (GlcNAc...) asparagine). A disulfide bridge connects residues Cys-190 and Cys-204. N-linked (GlcNAc...) asparagine glycosylation occurs at Asn-247. The chain crosses the membrane as a helical span at residues 276–296; the sequence is TIQTYIPCTLIVVLSWVSFWI. The Cytoplasmic segment spans residues 297-302; that stretch reads NKDAVP. A helical membrane pass occupies residues 303–322; sequence ARTSLGITTVLTMTTLSTIA. At 323–334 the chain is on the extracellular side; sequence RKSLPKVSYVTA. Residues 335–359 form a helical membrane-spanning segment; that stretch reads MDLFVSVCFIFVFSALVEYGTLHYF. Over 360-451 the chain is Cytoplasmic; sequence VSNRKPSKDK…IHIRIAKMDS (92 aa). Phosphoserine; by PKC is present on Ser-382. A helical transmembrane segment spans residues 452–472; that stretch reads YARIFFPTAFCLFNLVYWVSY. Over 473 to 475 the chain is Extracellular; sequence LYL.

Belongs to the ligand-gated ion channel (TC 1.A.9) family. Gamma-aminobutyric acid receptor (TC 1.A.9.5) subfamily. GABRG2 sub-subfamily. In terms of assembly, heteropentamer, formed by a combination of alpha (GABRA1-6), beta (GABRB1-3), gamma (GABRG1-3), delta (GABRD), epsilon (GABRE), rho (GABRR1-3), pi (GABRP) and theta (GABRQ) chains, each subunit exhibiting distinct physiological and pharmacological properties. Interacts with GABARAP. Interacts with KIF21B. Identified in a complex of 720 kDa composed of LHFPL4, NLGN2, GABRA1, GABRB2, GABRG2 and GABRB3. Interacts with LHFPL4. Interacts with SHISA7; interaction leads to the regulation of GABA(A) receptor trafficking, channel deactivation kinetics and pharmacology. Post-translationally, palmitoylated by ZDHHC3/GODZ; required for the accumulation of GABA(A) receptors at the postsynaptic membrane of inhibitory GABAergic synapses. In terms of processing, glycosylated.

It is found in the postsynaptic cell membrane. The protein localises to the cell membrane. The protein resides in the cell projection. It localises to the dendrite. Its subcellular location is the cytoplasmic vesicle membrane. It catalyses the reaction chloride(in) = chloride(out). Its activity is regulated as follows. Allosterically activated by benzodiazepines. Activated by pentobarbital. Inhibited by the antagonist bicuculline. Inhibited by zinc ions. Potentiated by histamine. Gamma subunit of the heteropentameric ligand-gated chloride channel gated by gamma-aminobutyric acid (GABA), a major inhibitory neurotransmitter in the brain. GABA-gated chloride channels, also named GABA(A) receptors (GABAAR), consist of five subunits arranged around a central pore and contain GABA active binding site(s) located at the alpha and beta subunit interface(s). When activated by GABA, GABAARs selectively allow the flow of chloride anions across the cell membrane down their electrochemical gradient. Gamma-2/GABRG2-containing GABAARs are found at both synaptic and extrasynaptic sites. Chloride influx into the postsynaptic neuron following GABAAR opening decreases the neuron ability to generate a new action potential, thereby reducing nerve transmission. GABAARs containing alpha-1 and beta-2 or -3 subunits exhibit synaptogenic activity; the gamma-2 subunit being necessary but not sufficient to induce rapid synaptic contacts formation. Extrasynaptic gamma-2-containing receptors contribute to the tonic GABAergic inhibition. GABAARs function also as histamine receptor where histamine binds at the interface of two neighboring beta subunits and potentiates GABA response in a gamma-2 subunit-controlled manner. This is Gamma-aminobutyric acid receptor subunit gamma-2 (GABRG2) from Bos taurus (Bovine).